The sequence spans 379 residues: Lipoyl synthase, mitochondrial (379 aa).

Residues cysteine 106, cysteine 111, cysteine 117, cysteine 137, cysteine 141, cysteine 144, and serine 352 each coordinate [4Fe-4S] cluster. The 220-residue stretch at glutamate 122–leucine 341 folds into the Radical SAM core domain.

It belongs to the radical SAM superfamily. Lipoyl synthase family. Requires [4Fe-4S] cluster as cofactor.

It is found in the mitochondrion. It catalyses the reaction [[Fe-S] cluster scaffold protein carrying a second [4Fe-4S](2+) cluster] + N(6)-octanoyl-L-lysyl-[protein] + 2 oxidized [2Fe-2S]-[ferredoxin] + 2 S-adenosyl-L-methionine + 4 H(+) = [[Fe-S] cluster scaffold protein] + N(6)-[(R)-dihydrolipoyl]-L-lysyl-[protein] + 4 Fe(3+) + 2 hydrogen sulfide + 2 5'-deoxyadenosine + 2 L-methionine + 2 reduced [2Fe-2S]-[ferredoxin]. It participates in protein modification; protein lipoylation via endogenous pathway; protein N(6)-(lipoyl)lysine from octanoyl-[acyl-carrier-protein]: step 2/2. Catalyzes the radical-mediated insertion of two sulfur atoms into the C-6 and C-8 positions of the octanoyl moiety bound to the lipoyl domains of lipoate-dependent enzymes, thereby converting the octanoylated domains into lipoylated derivatives. This chain is Lipoyl synthase, mitochondrial, found in Drosophila erecta (Fruit fly).